The chain runs to 146 residues: Large ribosomal subunit protein uL15 (146 aa).

Residues 1 to 13 (MKLHELKPAEGSR) are compositionally biased toward basic and acidic residues. The disordered stretch occupies residues 1–51 (MKLHELKPAEGSRKVRNRVGRGIGSGNGKTAGRGHKGQNARSGGGVRLGFE). 2 stretches are compositionally biased toward gly residues: residues 21-31 (RGIGSGNGKTA) and 42-51 (SGGGVRLGFE).

This sequence belongs to the universal ribosomal protein uL15 family. In terms of assembly, part of the 50S ribosomal subunit.

Its function is as follows. Binds to the 23S rRNA. In Bacillus mycoides (strain KBAB4) (Bacillus weihenstephanensis), this protein is Large ribosomal subunit protein uL15.